We begin with the raw amino-acid sequence, 210 residues long: V-type sodium ATPase subunit D (210 aa).

This sequence belongs to the V-ATPase D subunit family.

Its function is as follows. Involved in ATP-driven sodium extrusion. The chain is V-type sodium ATPase subunit D (ntpD) from Enterococcus hirae (strain ATCC 9790 / DSM 20160 / JCM 8729 / LMG 6399 / NBRC 3181 / NCIMB 6459 / NCDO 1258 / NCTC 12367 / WDCM 00089 / R).